We begin with the raw amino-acid sequence, 572 residues long: Proline--tRNA ligase (572 aa).

This sequence belongs to the class-II aminoacyl-tRNA synthetase family. ProS type 1 subfamily. Homodimer.

Its subcellular location is the cytoplasm. It carries out the reaction tRNA(Pro) + L-proline + ATP = L-prolyl-tRNA(Pro) + AMP + diphosphate. Catalyzes the attachment of proline to tRNA(Pro) in a two-step reaction: proline is first activated by ATP to form Pro-AMP and then transferred to the acceptor end of tRNA(Pro). As ProRS can inadvertently accommodate and process non-cognate amino acids such as alanine and cysteine, to avoid such errors it has two additional distinct editing activities against alanine. One activity is designated as 'pretransfer' editing and involves the tRNA(Pro)-independent hydrolysis of activated Ala-AMP. The other activity is designated 'posttransfer' editing and involves deacylation of mischarged Ala-tRNA(Pro). The misacylated Cys-tRNA(Pro) is not edited by ProRS. The protein is Proline--tRNA ligase of Klebsiella pneumoniae (strain 342).